Here is a 304-residue protein sequence, read N- to C-terminus: Homoserine O-acetyltransferase (304 aa).

Cys142 (acyl-thioester intermediate) is an active-site residue. Substrate is bound by residues Lys163 and Ser191. His234 serves as the catalytic Proton acceptor. Glu236 is an active-site residue. Arg248 is a substrate binding site.

This sequence belongs to the MetA family.

The protein localises to the cytoplasm. It catalyses the reaction L-homoserine + acetyl-CoA = O-acetyl-L-homoserine + CoA. It participates in amino-acid biosynthesis; L-methionine biosynthesis via de novo pathway; O-acetyl-L-homoserine from L-homoserine: step 1/1. Its function is as follows. Transfers an acetyl group from acetyl-CoA to L-homoserine, forming acetyl-L-homoserine. The protein is Homoserine O-acetyltransferase of Thermotoga petrophila (strain ATCC BAA-488 / DSM 13995 / JCM 10881 / RKU-1).